We begin with the raw amino-acid sequence, 748 residues long: Histone-lysine N-methyltransferase EZH2 (748 aa).

Acidic residues predominate over residues 184 to 199; sequence YEDDEDGDDNQDDEQD. 2 disordered regions span residues 184 to 220 and 342 to 428; these read YEDDEDGDDNQDDEQDDTAKDQDDNMEDKETQPLRKF and AERI…NIEP. Residues 200–220 are compositionally biased toward basic and acidic residues; that stretch reads DTAKDQDDNMEDKETQPLRKF. The span at 347–359 shows a compositional bias: basic residues; that stretch reads TPPKRPSGRRRGR. Over residues 362–374 the composition is skewed to polar residues; sequence NNTSRPSTPTVNV. A compositionally biased stretch (basic and acidic residues) spans 376-387; the sequence is EAKDTDSDREAG. The CXC domain occupies 505 to 607; it reads CRKIQLKKDG…SKNVSCKNCS (103 aa). The 116-residue stretch at 614-729 folds into the SET domain; that stretch reads KHLLLAPSDV…TGEELFFDYR (116 aa).

The protein belongs to the class V-like SAM-binding methyltransferase superfamily. Histone-lysine methyltransferase family. EZ subfamily. As to quaternary structure, component of the prc2/eed-ezh2 complex.

It is found in the nucleus. The enzyme catalyses L-lysyl(27)-[histone H3] + 3 S-adenosyl-L-methionine = N(6),N(6),N(6)-trimethyl-L-lysyl(27)-[histone H3] + 3 S-adenosyl-L-homocysteine + 3 H(+). In terms of biological role, polycomb group (PcG) protein. Catalytic subunit of the prc2/eed-ezh2 complex, which methylates 'Lys-9' and 'Lys-27' of histone H3, leading to transcriptional repression of the affected target gene. May repress transcription of the egr2 and en2 genes. May regulate the circadian clock via histone methylation at the promoter of the circadian genes. The polypeptide is Histone-lysine N-methyltransferase EZH2 (ezh2-a) (Xenopus laevis (African clawed frog)).